A 288-amino-acid polypeptide reads, in one-letter code: Energy-coupling factor transporter ATP-binding protein EcfA3 (288 aa).

An ABC transporter domain is found at 3 to 245 (INFRNVSFSY…ESYLRKEKLR (243 aa)). An ATP-binding site is contributed by 40–47 (GHTGSGKS).

It belongs to the ABC transporter superfamily. Energy-coupling factor EcfA family. As to quaternary structure, forms a stable energy-coupling factor (ECF) transporter complex composed of 2 membrane-embedded substrate-binding proteins (S component), 2 ATP-binding proteins (A component) and 2 transmembrane proteins (T component).

It is found in the cell membrane. Its function is as follows. ATP-binding (A) component of a common energy-coupling factor (ECF) ABC-transporter complex. Unlike classic ABC transporters this ECF transporter provides the energy necessary to transport a number of different substrates. The polypeptide is Energy-coupling factor transporter ATP-binding protein EcfA3 (Oenococcus oeni (strain ATCC BAA-331 / PSU-1)).